Reading from the N-terminus, the 735-residue chain is MATTKFPKFSQGLANDPTTRRIWFGIATAHDFENHDGMTEENLYQKIFASHFGQLAIIFLWTSGNLFHVAWQGNFEQWVQSPLNVRPIAHAIWDPHFGQPAVEAFTRGGASGPVNISTSGVYQWWYTIGMRTNQDLYIGSIFLSFAATAFLFAGWLHLQPKFQPGLSWFKNAESRLNHHLSGLFGVSSLAWTGHLIHVAIPEARGQHVRWDNFLTTLPHPQGLTPFFTGNWAAYAENPDTASHLFGTSEGSGTAILTFLGGFHPQTQSLWLSDMAHHHLAIAVLFIVAGHMYRTNFGIGHSMREILEAHKAPSGNLGNGHTGLFDTVNNSLHFQLGLALASVGTICSLVAQHMYSLPPYAFLAQDFTTQASLYTHHQYIAGFILCGAFAHGAIFFIRDYDPEANKGNVLARMLEHKEAIISHLSWVSLFLGFHTLGLYVHNDVMQAFGTPEKQILIEPVFAQWIQASHGKTAYGFDLLLSQSTSNAYAAGQSLWLPGWLEAINNNNNSLFLTIGPGDFLVHHAIALGLHTTTLILVKGALDARGSKLMPDKKDFGYSFPCDGPGRGGTCDISAWDAFYLAVFWMLNTIGWVTFYFHWKHLGIWQGNVSQFNESSTYLMGWLRDYLWLNSSQLINGYNPFGMNSLSVWSWMFLFGHLIYATGFMFLISWRGYWQELIETLVWAHERTPIADLIRWKDKPVALSIVQARVVGLAHFSAGYILTYAAFLIASTSAKFG.

8 consecutive transmembrane segments (helical) span residues 47-70 (IFAS…FHVA), 136-159 (LYIG…LHLQ), 176-200 (LNHH…HVAI), 274-292 (MAHH…GHMY), 331-354 (LHFQ…QHMY), 370-396 (ASLY…IFFI), 418-440 (AIIS…LYVH), and 518-536 (FLVH…LILV). Positions 560 and 569 each coordinate [4Fe-4S] cluster. 2 helical membrane-spanning segments follow: residues 576–597 (AFYL…YFHW) and 644–666 (LSVW…MFLI). Chlorophyll a contacts are provided by H655, M663, and Y671. Phylloquinone is bound at residue W672. A helical membrane pass occupies residues 708 to 728 (VVGLAHFSAGYILTYAAFLIA).

The protein belongs to the PsaA/PsaB family. In terms of assembly, the PsaA/B heterodimer binds the P700 chlorophyll special pair and subsequent electron acceptors. PSI consists of a core antenna complex that captures photons, and an electron transfer chain that converts photonic excitation into a charge separation. The eukaryotic PSI reaction center is composed of at least 11 subunits. P700 is a chlorophyll a/chlorophyll a' dimer, A0 is one or more chlorophyll a, A1 is one or both phylloquinones and FX is a shared 4Fe-4S iron-sulfur center. serves as cofactor.

The protein localises to the plastid. The protein resides in the chloroplast thylakoid membrane. It catalyses the reaction reduced [plastocyanin] + hnu + oxidized [2Fe-2S]-[ferredoxin] = oxidized [plastocyanin] + reduced [2Fe-2S]-[ferredoxin]. In terms of biological role, psaA and PsaB bind P700, the primary electron donor of photosystem I (PSI), as well as the electron acceptors A0, A1 and FX. PSI is a plastocyanin/cytochrome c6-ferredoxin oxidoreductase, converting photonic excitation into a charge separation, which transfers an electron from the donor P700 chlorophyll pair to the spectroscopically characterized acceptors A0, A1, FX, FA and FB in turn. Oxidized P700 is reduced on the lumenal side of the thylakoid membrane by plastocyanin or cytochrome c6. This is Photosystem I P700 chlorophyll a apoprotein A2 from Tupiella akineta (Green alga).